The following is a 784-amino-acid chain: Protein DBF4 homolog B (784 aa).

One can recognise a BRCT domain in the interval 27 to 117 (CREITFAGKS…SRGKQLLKKV (91 aa)). A disordered region spans residues 222-243 (TVKKKDPGDQEEEEGQRSQKPQ). Residues 244 to 293 (ARKRKGYCECCEETFDTLSEHLVGEHHFRFVSNPLSYKMIDDLAAQLTCD) form a DBF4-type zinc finger. Zn(2+) contacts are provided by cysteine 251, cysteine 254, histidine 264, and histidine 270. Disordered regions lie at residues 299-332 (FGSPTSPEAERSSQNEDWDLDLAPGEAEPAGNEG), 348-368 (HADCEDQGAPAYLRDGGAEEP), and 495-529 (TVGSQGDVTSHSAANKPHTENCPVDSTGDRHAQPA). Positions 498-507 (SQGDVTSHSA) are enriched in polar residues.

In terms of assembly, forms a complex with cdc7. Post-translationally, phosphorylated. Stably phosphorylated throughout the cell cycle.

The protein resides in the nucleus. Regulatory subunit for cdc7 which activates its kinase activity thereby playing a central role in DNA replication and cell proliferation. Specifically required during the initiation of DNA replication in egg and during early embryonic development. The complex cdc7-dbf4b phosphorylates mcm2 and mcm4 subunits and is required for cdc45 loading. The chain is Protein DBF4 homolog B (dbf4b) from Xenopus laevis (African clawed frog).